The following is a 680-amino-acid chain: UvrABC system protein C (680 aa).

A GIY-YIG domain is found at 66 to 144 (NSPGVYRMFN…IKRLRPRFNV (79 aa)). Residues 254–289 (QKVKSHMAEAMNQAAEDLDFERAAIYRDRLAALSHV) form the UVR domain.

The protein belongs to the UvrC family. In terms of assembly, interacts with UvrB in an incision complex.

It localises to the cytoplasm. In terms of biological role, the UvrABC repair system catalyzes the recognition and processing of DNA lesions. UvrC both incises the 5' and 3' sides of the lesion. The N-terminal half is responsible for the 3' incision and the C-terminal half is responsible for the 5' incision. The sequence is that of UvrABC system protein C from Rhizobium johnstonii (strain DSM 114642 / LMG 32736 / 3841) (Rhizobium leguminosarum bv. viciae).